The primary structure comprises 148 residues: Putative pre-16S rRNA nuclease (148 aa).

It belongs to the YqgF nuclease family.

It is found in the cytoplasm. In terms of biological role, could be a nuclease involved in processing of the 5'-end of pre-16S rRNA. In Nitrosomonas europaea (strain ATCC 19718 / CIP 103999 / KCTC 2705 / NBRC 14298), this protein is Putative pre-16S rRNA nuclease.